The chain runs to 344 residues: Dihydroorotase (344 aa).

2 residues coordinate Zn(2+): H13 and H15. Residues 15–17 and N41 each bind substrate; that span reads HLR. K98, H135, and H173 together coordinate Zn(2+). The residue at position 98 (K98) is an N6-carboxylysine. Position 135 (H135) interacts with substrate. A substrate-binding site is contributed by L218. D247 contributes to the Zn(2+) binding site. D247 is a catalytic residue. Substrate-binding residues include H251 and A263.

This sequence belongs to the metallo-dependent hydrolases superfamily. DHOase family. Class II DHOase subfamily. In terms of assembly, homodimer. Requires Zn(2+) as cofactor.

It carries out the reaction (S)-dihydroorotate + H2O = N-carbamoyl-L-aspartate + H(+). Its pathway is pyrimidine metabolism; UMP biosynthesis via de novo pathway; (S)-dihydroorotate from bicarbonate: step 3/3. In terms of biological role, catalyzes the reversible cyclization of carbamoyl aspartate to dihydroorotate. The polypeptide is Dihydroorotase (Neisseria meningitidis serogroup C (strain 053442)).